A 543-amino-acid chain; its full sequence is Ribonuclease Y (543 aa).

The chain crosses the membrane as a helical span at residues 4 to 24 (IIMIPVATAIVSLLVGTVIGY). Residues 233–296 (TVSVVDLPNE…EIAKRAMERL (64 aa)) enclose the KH domain. The 94-residue stretch at 359-452 (VLSHSIEVGK…VVAADTISSA (94 aa)) folds into the HD domain.

This sequence belongs to the RNase Y family.

It is found in the cell membrane. Endoribonuclease that initiates mRNA decay. This chain is Ribonuclease Y, found in Lactobacillus helveticus (strain DPC 4571).